We begin with the raw amino-acid sequence, 948 residues long: Zinc finger CCCH domain-containing protein 18 (948 aa).

N-acetylmethionine is present on M1. The segment at 1–219 (MDVAESPELD…SDRKVRPRPT (219 aa)) is disordered. Position 6 is a phosphoserine (S6). The segment covering 15–25 (EDEEQPALSDD) has biased composition (acidic residues). A phosphoserine mark is found at S33, S45, S58, S64, S71, S75, S80, and S92. The span at 70–86 (ASEPKSQDQDSEAHELS) shows a compositional bias: basic and acidic residues. Over residues 95–105 (EEGDDVEEDGT) the composition is skewed to acidic residues. T105 bears the Phosphothreonine mark. S106 and S114 each carry phosphoserine. Basic and acidic residues predominate over residues 106 to 120 (SDLRDEASSVTRELD). Acidic residues-rich tracts occupy residues 121-132 (EHELDYDEEVPE) and 139-154 (QEEE…EEEK). S169 is subject to Phosphoserine. The segment covering 177–186 (EAAKEKKKED) has biased composition (basic and acidic residues). Over residues 187–203 (DDGEIDDGEIDDDDLEE) the composition is skewed to acidic residues. Over residues 204–213 (GEVKDPSDRK) the composition is skewed to basic and acidic residues. The C3H1-type zinc-finger motif lies at 215-241 (RPRPTCRFFMKGNCTWGMSCRFIHPGV). G245 bears the Omega-N-methylarginine mark. Disordered stretches follow at residues 272–296 (ANPW…TESA) and 388–922 (YTEA…TLSR). The span at 392–480 (EPYHNYRERE…DREKDKEKPK (89 aa)) shows a compositional bias: basic and acidic residues. Residues 395 to 460 (HNYRERERER…RERAKRDEKD (66 aa)) adopt a coiled-coil conformation. S483 is modified (phosphoserine). K506 participates in a covalent cross-link: Glycyl lysine isopeptide (Lys-Gly) (interchain with G-Cter in SUMO2). The segment covering 506-516 (KRADEWKDPWR) has biased composition (basic and acidic residues). 3 positions are modified to phosphoserine: S528, S530, and S532. The segment covering 541–602 (SASSASASNS…SRSRSFSSSP (62 aa)) has biased composition (low complexity). Residues 603–612 (SPSPTPSPHR) show a composition bias toward pro residues. Glycyl lysine isopeptide (Lys-Gly) (interchain with G-Cter in SUMO2) cross-links involve residues K618 and K657. Residues 657–666 (KPGDLREARR) show a composition bias toward basic and acidic residues. Low complexity-rich tracts occupy residues 688 to 721 (GSSY…SVHS) and 732 to 746 (ASPV…PTPA). Residues 756–770 (KKEDGVREEKRRRDP) show a composition bias toward basic and acidic residues. The span at 774–804 (PPKSSKAPAGGKASQQAAAPQPAVPGQPQQG) shows a compositional bias: low complexity. K810 bears the N6-acetyllysine mark. Residue K813 forms a Glycyl lysine isopeptide (Lys-Gly) (interchain with G-Cter in SUMO2) linkage. Over residues 820 to 837 (AADKGSRKRYEPSDKDRQ) the composition is skewed to basic and acidic residues. Phosphoserine occurs at positions 838, 847, 863, 888, and 891. Over residues 888–898 (SPQSKGSSKVT) the composition is skewed to polar residues. The span at 902–919 (GKATDTATAGTKSGKAST) shows a compositional bias: low complexity. Residue K903 forms a Glycyl lysine isopeptide (Lys-Gly) (interchain with G-Cter in SUMO2) linkage. Positions 916–945 (KASTLSRREELLKQLKAVEDAIARKRAKIP) form a coiled coil.

Interacts with ZFC3H1 in a RNase-insensitive manner.

Its subcellular location is the nucleus. This Mus musculus (Mouse) protein is Zinc finger CCCH domain-containing protein 18 (Zc3h18).